Consider the following 1013-residue polypeptide: Putative helicase mov-10-B.1 (1013 aa).

2 stretches are compositionally biased toward polar residues: residues 91 to 103 and 113 to 123; these read QWSRPYRSQQNHA and RPSTTRVSDPS. A disordered region spans residues 91–129; that stretch reads QWSRPYRSQQNHATPHLNDAISRPSTTRVSDPSSVPEPE. 550–557 contributes to the ATP binding site; that stretch reads GPPGTGKT. A DEAG box motif is present at residues 672-675; the sequence is DEAG.

This sequence belongs to the DNA2/NAM7 helicase family. SDE3 subfamily.

It is found in the cytoplasm. The protein localises to the P-body. It carries out the reaction ATP + H2O = ADP + phosphate + H(+). Its function is as follows. Probable RNA helicase. Required for RNA-mediated gene silencing by the RNA-induced silencing complex (RISC). Required for both miRNA-mediated translational repression and miRNA-mediated cleavage of complementary mRNAs by RISC. The protein is Putative helicase mov-10-B.1 (mov10b.1) of Danio rerio (Zebrafish).